The chain runs to 49 residues: Large ribosomal subunit protein bL33A (49 aa).

This sequence belongs to the bacterial ribosomal protein bL33 family.

This Geobacillus thermodenitrificans (strain NG80-2) protein is Large ribosomal subunit protein bL33A.